The chain runs to 156 residues: V-type sodium ATPase subunit K (156 aa).

Helical transmembrane passes span 11 to 31, 60 to 80, 89 to 109, and 132 to 152; these read GMVF…IGSA, LLPG…FINL, GLNF…SGIA, and IIFA…SFLL.

It belongs to the V-ATPase proteolipid subunit family. The N-terminus is blocked.

It localises to the cell membrane. Functionally, involved in ATP-driven sodium extrusion. This chain is V-type sodium ATPase subunit K (ntpK), found in Enterococcus hirae (strain ATCC 9790 / DSM 20160 / JCM 8729 / LMG 6399 / NBRC 3181 / NCIMB 6459 / NCDO 1258 / NCTC 12367 / WDCM 00089 / R).